A 454-amino-acid chain; its full sequence is Glutamate--tRNA ligase (454 aa).

Positions 7–17 match the 'HIGH' region motif; the sequence is PSPTGCLHIGG. Residues C96, C98, C123, and D125 each contribute to the Zn(2+) site. The short motif at 230–234 is the 'KMSKS' region element; that stretch reads RLSKR. K233 serves as a coordination point for ATP.

This sequence belongs to the class-I aminoacyl-tRNA synthetase family. Glutamate--tRNA ligase type 1 subfamily. Monomer. It depends on Zn(2+) as a cofactor.

The protein resides in the cytoplasm. The enzyme catalyses tRNA(Glu) + L-glutamate + ATP = L-glutamyl-tRNA(Glu) + AMP + diphosphate. In terms of biological role, catalyzes the attachment of glutamate to tRNA(Glu) in a two-step reaction: glutamate is first activated by ATP to form Glu-AMP and then transferred to the acceptor end of tRNA(Glu). This is Glutamate--tRNA ligase from Ruthia magnifica subsp. Calyptogena magnifica.